Consider the following 169-residue polypeptide: MQSNIENVSRDYAKILQSADLEKEINPLCTNIEDMLARLDEFETLLASVRAESNGMMANNVCSILGFTDSFEQLKARIDGLEQCVGVVSANLSEVERSVDIAEEELHVTDYSLKGLLLKPLKAKLSASDTSTLSSLPRSNLVEEEYQPVEIYKSDDYFGKSEEENYVAK.

The protein belongs to the BLOC1S4 family. Component of the biogenesis of lysosome-related organelles complex-1 (BLOC-1) composed of Blos1, Blos2, Blos3, Blos4, Dysb, Muted, Pldn and Snapin. Interacts with Pldn.

In terms of biological role, component of the biogenesis of lysosome-related organelles complex-1 (BLOC-1) involved in pigment granule biogenesis. The polypeptide is Biogenesis of lysosome-related organelles complex 1 subunit 4 (Drosophila melanogaster (Fruit fly)).